A 73-amino-acid polypeptide reads, in one-letter code: Large ribosomal subunit protein bL31 (73 aa).

It belongs to the bacterial ribosomal protein bL31 family. Type A subfamily. Part of the 50S ribosomal subunit.

In terms of biological role, binds the 23S rRNA. This chain is Large ribosomal subunit protein bL31, found in Bartonella tribocorum (strain CIP 105476 / IBS 506).